The following is a 412-amino-acid chain: Multidrug resistance protein MdtA (412 aa).

The N-terminal stretch at 1 to 21 (MKGSNIRRWGAALAVVIIAGA) is a signal peptide. Disordered regions lie at residues 33 to 53 (GSGAPAAGQGPQGPGGARHGR) and 389 to 412 (VVTASSGEQAQPAPRQSGKHGARS).

Belongs to the membrane fusion protein (MFP) (TC 8.A.1) family. Part of a tripartite efflux system composed of MdtA, MdtB and MdtC.

It is found in the cell inner membrane. In Klebsiella pneumoniae subsp. pneumoniae (strain ATCC 700721 / MGH 78578), this protein is Multidrug resistance protein MdtA.